Here is a 254-residue protein sequence, read N- to C-terminus: MLNVGIYGGSGRVGSLLIKNLQHDEVARVSVVHVLKGIELAVPGATVTNDIDTLIQKSDVIIDFTLPEGTESLLERLLEHPKPLVSGTTGLNKHQQNLMQTLAQKTPVLYATNMSLGIALLKRLVAVTSEKLRDFDIEIVEMHHRYKKDAPSGTALTLAEFAAKARGLDLEKVRVSGRDGNIGERSKEEIGVFALRGGDIVGRHTVGFYNDGEYIELNHTATSRDTFAKGAIKAAKWLVSQEPGFYTIDDCLGL.

NAD(+) is bound by residues 8–13 (GGSGRV), 87–89 (GTT), and 111–114 (ATNM). H143 (proton donor/acceptor) is an active-site residue. H144 serves as a coordination point for (S)-2,3,4,5-tetrahydrodipicolinate. The Proton donor role is filled by K147. Residue 153–154 (GT) participates in (S)-2,3,4,5-tetrahydrodipicolinate binding.

It belongs to the DapB family.

It is found in the cytoplasm. It carries out the reaction (S)-2,3,4,5-tetrahydrodipicolinate + NAD(+) + H2O = (2S,4S)-4-hydroxy-2,3,4,5-tetrahydrodipicolinate + NADH + H(+). The catalysed reaction is (S)-2,3,4,5-tetrahydrodipicolinate + NADP(+) + H2O = (2S,4S)-4-hydroxy-2,3,4,5-tetrahydrodipicolinate + NADPH + H(+). It functions in the pathway amino-acid biosynthesis; L-lysine biosynthesis via DAP pathway; (S)-tetrahydrodipicolinate from L-aspartate: step 4/4. Catalyzes the conversion of 4-hydroxy-tetrahydrodipicolinate (HTPA) to tetrahydrodipicolinate. This is 4-hydroxy-tetrahydrodipicolinate reductase from Nitratiruptor sp. (strain SB155-2).